The following is a 193-amino-acid chain: ATP-dependent Clp protease proteolytic subunit 1 (193 aa).

Residue Ser-98 is the Nucleophile of the active site. The active site involves His-123.

This sequence belongs to the peptidase S14 family. In terms of assembly, fourteen ClpP subunits assemble into 2 heptameric rings which stack back to back to give a disk-like structure with a central cavity, resembling the structure of eukaryotic proteasomes.

The protein localises to the cytoplasm. The enzyme catalyses Hydrolysis of proteins to small peptides in the presence of ATP and magnesium. alpha-casein is the usual test substrate. In the absence of ATP, only oligopeptides shorter than five residues are hydrolyzed (such as succinyl-Leu-Tyr-|-NHMec, and Leu-Tyr-Leu-|-Tyr-Trp, in which cleavage of the -Tyr-|-Leu- and -Tyr-|-Trp bonds also occurs).. Functionally, cleaves peptides in various proteins in a process that requires ATP hydrolysis. Has a chymotrypsin-like activity. Plays a major role in the degradation of misfolded proteins. In Bacillus cereus (strain ZK / E33L), this protein is ATP-dependent Clp protease proteolytic subunit 1.